The primary structure comprises 558 residues: PE cleavage protein A (558 aa).

The PE domain maps to 1–93; the sequence is MSFLVVVPEF…SGSYAAAEAT (93 aa). Asp297 is an active-site residue.

The protein belongs to the mycobacterial PE family. PGRS subfamily. In terms of processing, undergoes auto-proteolytic processing.

The protein resides in the secreted. The protein localises to the cell surface. Functionally, aspartic protease that processes the lipase LipY and other PE_PGRS proteins. Can also cleave itself. The protein is PE cleavage protein A of Mycobacterium tuberculosis (strain CDC 1551 / Oshkosh).